The following is a 607-amino-acid chain: Elongation factor 4 (607 aa).

The tr-type G domain occupies 11-193 (SRIRNFSIIA…QVVEKVPAPA (183 aa)). GTP-binding positions include 23 to 28 (DHGKST) and 140 to 143 (NKID).

The protein belongs to the TRAFAC class translation factor GTPase superfamily. Classic translation factor GTPase family. LepA subfamily.

The protein resides in the cell membrane. The enzyme catalyses GTP + H2O = GDP + phosphate + H(+). In terms of biological role, required for accurate and efficient protein synthesis under certain stress conditions. May act as a fidelity factor of the translation reaction, by catalyzing a one-codon backward translocation of tRNAs on improperly translocated ribosomes. Back-translocation proceeds from a post-translocation (POST) complex to a pre-translocation (PRE) complex, thus giving elongation factor G a second chance to translocate the tRNAs correctly. Binds to ribosomes in a GTP-dependent manner. The chain is Elongation factor 4 from Shouchella clausii (strain KSM-K16) (Alkalihalobacillus clausii).